The chain runs to 473 residues: Arginine biosynthesis bifunctional protein ArgJ, mitochondrial (473 aa).

Substrate contacts are provided by Thr201, Lys230, Thr241, Glu328, Asn468, and Thr473. Thr241 acts as the Nucleophile in catalysis.

The protein belongs to the ArgJ family. In terms of assembly, heterodimer of an alpha and a beta chain. The alpha and beta chains are autoproteolytically processed from a single precursor protein within the mitochondrion.

It is found in the mitochondrion matrix. It carries out the reaction N(2)-acetyl-L-ornithine + L-glutamate = N-acetyl-L-glutamate + L-ornithine. It catalyses the reaction L-glutamate + acetyl-CoA = N-acetyl-L-glutamate + CoA + H(+). It participates in amino-acid biosynthesis; L-arginine biosynthesis; L-ornithine and N-acetyl-L-glutamate from L-glutamate and N(2)-acetyl-L-ornithine (cyclic): step 1/1. The protein operates within amino-acid biosynthesis; L-arginine biosynthesis; N(2)-acetyl-L-ornithine from L-glutamate: step 1/4. In terms of biological role, catalyzes two activities which are involved in the cyclic version of arginine biosynthesis: the synthesis of acetylglutamate from glutamate and acetyl-CoA, and of ornithine by transacetylation between acetylornithine and glutamate. The sequence is that of Arginine biosynthesis bifunctional protein ArgJ, mitochondrial from Ajellomyces capsulatus (strain H143) (Darling's disease fungus).